The chain runs to 289 residues: Thymidylate synthase (289 aa).

DUMP contacts are provided by residues Arg-21 and 150–151 (RR). Cys-170 acts as the Nucleophile in catalysis. Residues 191–194 (RSGD), Asn-202, and 232–234 (HIY) contribute to the dUMP site. (6R)-5,10-methylene-5,6,7,8-tetrahydrofolate is bound at residue Asp-194. Ala-288 contributes to the (6R)-5,10-methylene-5,6,7,8-tetrahydrofolate binding site.

Belongs to the thymidylate synthase family. Bacterial-type ThyA subfamily. In terms of assembly, homodimer.

Its subcellular location is the cytoplasm. It carries out the reaction dUMP + (6R)-5,10-methylene-5,6,7,8-tetrahydrofolate = 7,8-dihydrofolate + dTMP. The protein operates within pyrimidine metabolism; dTTP biosynthesis. Functionally, catalyzes the reductive methylation of 2'-deoxyuridine-5'-monophosphate (dUMP) to 2'-deoxythymidine-5'-monophosphate (dTMP) while utilizing 5,10-methylenetetrahydrofolate (mTHF) as the methyl donor and reductant in the reaction, yielding dihydrofolate (DHF) as a by-product. This enzymatic reaction provides an intracellular de novo source of dTMP, an essential precursor for DNA biosynthesis. The polypeptide is Thymidylate synthase (Mycoplasmopsis synoviae (strain 53) (Mycoplasma synoviae)).